Here is a 229-residue protein sequence, read N- to C-terminus: Thymidylate kinase (229 aa).

9–16 (GPEGSGKS) provides a ligand contact to ATP.

This sequence belongs to the thymidylate kinase family.

The catalysed reaction is dTMP + ATP = dTDP + ADP. Functionally, phosphorylation of dTMP to form dTDP in both de novo and salvage pathways of dTTP synthesis. This chain is Thymidylate kinase, found in Roseiflexus castenholzii (strain DSM 13941 / HLO8).